The chain runs to 271 residues: Phosphoglycerate mutase-like protein (271 aa).

The active-site Tele-phosphohistidine intermediate is H22. The active-site Proton donor/acceptor is E134. The interval 252 to 271 (SAETTNYPGKVPEGLDNPSG) is disordered.

It belongs to the phosphoglycerate mutase family. In terms of tissue distribution, expressed in the shoot apical meristem and meristematic zone of the root tips.

In terms of biological role, may play a role in carbohydrates metabolism. The protein is Phosphoglycerate mutase-like protein of Arabidopsis thaliana (Mouse-ear cress).